Consider the following 91-residue polypeptide: Ragulator complex protein LAMTOR5 homolog (91 aa).

The protein belongs to the LAMTOR5 family. In terms of assembly, part of the Ragulator complex.

The protein resides in the cytoplasm. It is found in the lysosome. Its function is as follows. Regulator of the TOR pathway, a signaling cascade that promotes cell growth in response to growth factors, energy levels, and amino acids. As part of the Ragulator complex, may activate the TOR signaling cascade in response to amino acids. In Nematostella vectensis (Starlet sea anemone), this protein is Ragulator complex protein LAMTOR5 homolog.